Reading from the N-terminus, the 1226-residue chain is MGSKVRQQIEAQLKQRILLIDGGMGTMIQGYKLEEQDYRGERFANWHCDLKGNNDLLVLSQPQLIKEIHSAYLEAGADILETNTFNATTIAMADYEMESLSEEINFAAAKLAREVADEWTAKTPDKPRYVAGVLGPTNRTCSISPDVNDPGYRNVSFDELVEAYSESTRALIRGGADLILIETIFDTLNAKACAFAVDSVFEELGVALPVMISGTITDASGRTLSGQTTEAFYNSLRHVRPLSFGLNCALGPDELRPYVEELSRISESFVSAHPNAGLPNAFGEYDLSPEDMAEHVKEWASSGFLNLIGGCCGTTPEHIRQMAQAVEGVTPRALPDLPVACRLSGLEPLTIEKETLFINVGERTNVTGSARFKRLIKEEQYDEALEVARQQVENGAQIIDINMDEGMLDAQACMVRFLNLCASEPEISKVPIMVDSSKWEVIEAGLKCIQGKGIVNSISLKEGKEKFVEQAKLIRRYGAAVIVMAFDEVGQAETRTRKLEICTNAYRILVDEVGFPPEDIIFDPNIFAVATGIDEHNNYAVDFIEAVADIKRDLPHAMISGGVSNVSFSFRGNNYVREAIHAVFLYHCFKNGMDMGIVNAGQLEIYDNVPEKLREAVEDVVLNRRDDATERLLDIAAEYADKGVGKEEDASALEWRTWPVAKRLEHALVKGITEFIVADTEEARVNAVKPLEVIEGPLMDGMNVVGDLFGEGKMFLPQVVKSARVMKQAVAHLEPFINAEKQSGSSNGKILLATVKGDVHDIGKNIVGVVLQCNNYEIIDLGVMVPCEKILKVAIEENVDIIGLSGLITPSLDEMVHVAKEMERLNFDLPLLIGGATTSKAHTAVKIEQNYKNPVVYVNNASRAVGVCSSLLSDERRPAFIEKLDADYERVRDQHNRKKPRTKPVTLEQARANKVAIDWDAYTPPVPAKPGLHIFDDFDVATLRKYIDWTPFFMTWSLVGKYPTIFKHEEVGEEAQRLFHDANELLDRVEREGLLKARGICGLFPAASVGDDIEVYTDESRTEVAKVLRNLRQQTEKPKGFNYCLSDYIAPKESGKQDWVGAFAVTGGIGERELADEYKAQGDDYNAIMIQAVADRLAEAFAEYLHERVRKEIWGYAADENLSNDELIREKYQGIRPAPGYPACPEHTEKGPLWELLNVEENIGMSLTTSYAMYPGASVSGWYFSHPDSRYFAIAQIQDDQLESYADRKGWDRIEAEKWLGPNING.

The Hcy-binding domain maps to 6-326 (RQQIEAQLKQ…EHIRQMAQAV (321 aa)). Residues Cys-248, Cys-311, and Cys-312 each coordinate Zn(2+). One can recognise a Pterin-binding domain in the interval 357–618 (FINVGERTNV…VPEKLREAVE (262 aa)). A B12-binding N-terminal domain is found at 651–745 (SALEWRTWPV…FINAEKQSGS (95 aa)). Methylcob(III)alamin is bound by residues Glu-695, 757–761 (GDVHD), His-760, Ser-805, Thr-809, and Ala-861. The 136-residue stretch at 747 to 882 (NGKILLATVK…SDERRPAFIE (136 aa)) folds into the B12-binding domain. Residues 898 to 1226 (KKPRTKPVTL…EKWLGPNING (329 aa)) form the AdoMet activation domain. Residues Asp-948, Arg-1136, and 1191 to 1192 (YF) each bind S-adenosyl-L-methionine.

Belongs to the vitamin-B12 dependent methionine synthase family. Methylcob(III)alamin is required as a cofactor. It depends on Zn(2+) as a cofactor.

The catalysed reaction is (6S)-5-methyl-5,6,7,8-tetrahydrofolate + L-homocysteine = (6S)-5,6,7,8-tetrahydrofolate + L-methionine. It participates in amino-acid biosynthesis; L-methionine biosynthesis via de novo pathway; L-methionine from L-homocysteine (MetH route): step 1/1. In terms of biological role, catalyzes the transfer of a methyl group from methyl-cobalamin to homocysteine, yielding enzyme-bound cob(I)alamin and methionine. Subsequently, remethylates the cofactor using methyltetrahydrofolate. This chain is Methionine synthase (metH), found in Vibrio parahaemolyticus serotype O3:K6 (strain RIMD 2210633).